The sequence spans 950 residues: Protocadherin alpha-9 (950 aa).

Residues 1-29 form the signal peptide; the sequence is MLYSSRGDPEGQPLLLSLLILAMWVVGSG. 6 consecutive Cadherin domains span residues 30 to 133, 134 to 242, 243 to 350, 351 to 455, 456 to 565, and 588 to 678; these read QLHY…PPVF, PATQ…APVF, DRTL…APQL, TIKT…APAF, AQSE…APAL, and GVVV…APKS. The Extracellular segment spans residues 30–697; sequence QLHYSVPEEA…GPEVTLVDVN (668 aa). N-linked (GlcNAc...) asparagine glycans are attached at residues Asn254 and Asn265. The N-linked (GlcNAc...) asparagine glycan is linked to Asn548. Residues 698-718 form a helical membrane-spanning segment; that stretch reads VYLIIAICAVSSLLVLTLLLY. The Cytoplasmic portion of the chain corresponds to 719–950; that stretch reads TVLRCSAMPT…GNSTTDNSDQ (232 aa). A PXXP 1 repeat occupies 734–737; the sequence is PGKP. The tract at residues 734-894 is 5 X 4 AA repeats of P-X-X-P; sequence PGKPTLVCSS…PDKFIIPGSP (161 aa). 3 disordered regions span residues 770–808, 827–856, and 871–950; these read MAFS…DWRY, ILRA…EVSP, and YGPG…NSDQ. A compositionally biased stretch (polar residues) spans 789-798; it reads PSASSDSTGK. PXXP repeat units lie at residues 799–802, 832–835, 873–876, and 891–894; these read PRQP, PGGP, PGNP, and PGSP. A compositionally biased stretch (basic and acidic residues) spans 909-923; it reads DKSDFITFGKKEETK.

Its subcellular location is the cell membrane. In terms of biological role, potential calcium-dependent cell-adhesion protein. May be involved in the establishment and maintenance of specific neuronal connections in the brain. The protein is Protocadherin alpha-9 (PCDHA9) of Homo sapiens (Human).